The primary structure comprises 486 residues: Glucose-6-phosphate 1-dehydrogenase (486 aa).

NADP(+)-binding positions include 13–20 (GGTGDLAK), R47, 86–87 (DV), and K149. The substrate site is built by H179, K183, E217, and D236. H241 functions as the Proton acceptor in the catalytic mechanism. 2 residues coordinate substrate: K339 and K344.

Belongs to the glucose-6-phosphate dehydrogenase family. Homodimer.

It carries out the reaction D-glucose 6-phosphate + NAD(+) = 6-phospho-D-glucono-1,5-lactone + NADH + H(+). The enzyme catalyses D-glucose 6-phosphate + NADP(+) = 6-phospho-D-glucono-1,5-lactone + NADPH + H(+). The protein operates within carbohydrate degradation; pentose phosphate pathway; D-ribulose 5-phosphate from D-glucose 6-phosphate (oxidative stage): step 1/3. In terms of biological role, catalyzes the oxidation of glucose 6-phosphate to 6-phosphogluconolactone. Can utilize either NADP(+) or NAD(+). The sequence is that of Glucose-6-phosphate 1-dehydrogenase from Leuconostoc mesenteroides.